Reading from the N-terminus, the 499-residue chain is Putative protein phosphatase 2C 76 (499 aa).

The N-terminal stretch at 1 to 34 is a signal peptide; sequence MRLGCSGRRRRLLRAALLRLVVLVLVAPPRRCAG. The disordered stretch occupies residues 67–101; it reads AGSGGEGDGDRRSSSSSPPPPPHPRGCHVAVDRGR. Residues 92–457 enclose the PPM-type phosphatase domain; that stretch reads GCHVAVDRGR…DNVAAVIVPL (366 aa). Mn(2+) is bound by residues D138 and G139. Positions 286–306 are disordered; sequence KKTSVVSGKRRRKRNSNNRDD. Residues D397 and D448 each contribute to the Mn(2+) site.

This sequence belongs to the PP2C family. The cofactor is Mg(2+). Mn(2+) is required as a cofactor.

It carries out the reaction O-phospho-L-seryl-[protein] + H2O = L-seryl-[protein] + phosphate. It catalyses the reaction O-phospho-L-threonyl-[protein] + H2O = L-threonyl-[protein] + phosphate. The protein is Putative protein phosphatase 2C 76 of Oryza sativa subsp. japonica (Rice).